The following is a 263-amino-acid chain: Pyrrolysine synthase (263 aa).

L-pyrrolysine contacts are provided by leucine 8, valine 57, isoleucine 64, and alanine 107. Lysine 155, valine 156, aspartate 175, cysteine 210, proline 228, isoleucine 230, and glutamate 249 together coordinate NAD(+).

Belongs to the PylD family.

The catalysed reaction is (3R)-3-methyl-D-ornithyl-N(6)-L-lysine + NAD(+) = L-pyrrolysine + NH4(+) + NADH + 2 H(+). It participates in amino-acid biosynthesis; L-pyrrolysine biosynthesis. Catalyzes the ultimate step of the pyrrolysine biosynthesis pathway by converting the isopeptide (3R)-3-methyl-D-ornithyl-N(6)-L-lysine to the 22nd proteinogenic amino acid. Is able to use surrogate substrates such as (3R)-D-ornithyl-N(6)-L-lysine in vitro. This is Pyrrolysine synthase from Methanosarcina barkeri (strain Fusaro / DSM 804).